Reading from the N-terminus, the 705-residue chain is Choline transporter-like protein 2 (705 aa).

The Cytoplasmic segment spans residues 1 to 33 (MGKDSQHYYGKHGTPQKYDPTFKGPIYNRGCTD). Thr-14 bears the Phosphothreonine mark. A helical transmembrane segment spans residues 34–54 (IICCVLLFLAIVGYVAVGIIA). Over 55-232 (WTHGDPRKVI…QIFEDYTVSW (178 aa)) the chain is Extracellular. 2 N-linked (GlcNAc...) asparagine glycosylation sites follow: Asn-187 and Asn-200. Residues 233–253 (YWIVIGLVIAMLLSLMFIVLL) form a helical membrane-spanning segment. Residues 254–256 (RFL) lie on the Cytoplasmic side of the membrane. A helical membrane pass occupies residues 257 to 277 (AGVMVWVMIVMVILVLGYGIF). Over 278–315 (HCYAEYSRLRGEAGSDVSLVDLGFQTDLRVYLHLRQTW) the chain is Extracellular. The helical transmembrane segment at 316–336 (MAFMIILSILEVVIILLLIFL) threads the bilayer. Topologically, residues 337–364 (RKRILIAIALIKEASRAVGHVMCSMLYP) are cytoplasmic. A helical transmembrane segment spans residues 365-385 (LVTFFLLCLCIAYWASTSVFL). Residues 386-453 (STSNVAVYKI…LQIFNAFMFF (68 aa)) are Extracellular-facing. An N-linked (GlcNAc...) asparagine glycan is attached at Asn-416. A helical transmembrane segment spans residues 454–476 (WLANFVLALGQVTLAGAFASYYW). Residues 477-503 (AMRKPDDMPAFPLFSAFGRALRYHTGS) are Cytoplasmic-facing. The helical transmembrane segment at 504 to 524 (LAFGSLILAIVQIIRVMLEYL) threads the bilayer. The Extracellular portion of the chain corresponds to 525 to 562 (DQRLKAAQNKFAKFLMVCLKCCFWCLEKFIKFLNRNAY). The helical transmembrane segment at 563–583 (IMIAIYGTNFCTSARNAFFLL) threads the bilayer. At 584–598 (MRNIIRVAVLDKVTD) the chain is on the cytoplasmic side. The chain crosses the membrane as a helical span at residues 599–619 (FLFLLGKLLIVGSVGILAFFF). At 620–637 (FTHRIRIVQDTAPPLNYY) the chain is on the extracellular side. The helical transmembrane segment at 638–658 (WVPILTVIIGSYLIAHGFFSV) threads the bilayer. Topologically, residues 659–705 (YGMCVDTLFLCFLEDLERNDGSAERPYFMSSTLKKLLNKTNKKVAES) are cytoplasmic.

The protein belongs to the CTL (choline transporter-like) family. Interacts with COCH. In terms of processing, N-glycosylated.

The protein localises to the cell membrane. Its subcellular location is the mitochondrion outer membrane. It carries out the reaction choline(out) + n H(+)(in) = choline(in) + n H(+)(out). It catalyses the reaction ethanolamine(out) + n H(+)(in) = ethanolamine(in) + n H(+)(out). Its function is as follows. Exhibits choline transporter activity, as choline/H+ antiporter. Also acts as a low-affinity ethanolamine/H+ antiporter, regulating the supply of extracellular ethanolamine (Etn) for the CDP-Etn pathway, redistribute intracellular Etn and balance the CDP-Cho and CDP-Etn arms of the Kennedy pathway. The protein is Choline transporter-like protein 2 (Slc44a2) of Rattus norvegicus (Rat).